A 196-amino-acid chain; its full sequence is ATP-dependent Clp protease proteolytic subunit (196 aa).

The active-site Nucleophile is serine 101. Histidine 126 is a catalytic residue.

It belongs to the peptidase S14 family. In terms of assembly, component of the chloroplastic Clp protease core complex.

It is found in the plastid. It localises to the chloroplast stroma. It catalyses the reaction Hydrolysis of proteins to small peptides in the presence of ATP and magnesium. alpha-casein is the usual test substrate. In the absence of ATP, only oligopeptides shorter than five residues are hydrolyzed (such as succinyl-Leu-Tyr-|-NHMec, and Leu-Tyr-Leu-|-Tyr-Trp, in which cleavage of the -Tyr-|-Leu- and -Tyr-|-Trp bonds also occurs).. Its function is as follows. Cleaves peptides in various proteins in a process that requires ATP hydrolysis. Has a chymotrypsin-like activity. Plays a major role in the degradation of misfolded proteins. In Gossypium hirsutum (Upland cotton), this protein is ATP-dependent Clp protease proteolytic subunit.